An 82-amino-acid chain; its full sequence is Three-finger toxin MALT0063C (82 aa).

The N-terminal stretch at 1–21 (MRTLLLTLVVVTIVCLDLGNS) is a signal peptide. 4 disulfides stabilise this stretch: Cys-24–Cys-42, Cys-35–Cys-60, Cys-64–Cys-72, and Cys-73–Cys-78.

Belongs to the three-finger toxin family. Short-chain subfamily. As to expression, expressed by the venom gland.

It localises to the secreted. This is Three-finger toxin MALT0063C from Micrurus altirostris (Uruguayan coral snake).